A 419-amino-acid chain; its full sequence is Gamma-glutamyl phosphate reductase (419 aa).

Belongs to the gamma-glutamyl phosphate reductase family.

It localises to the cytoplasm. It carries out the reaction L-glutamate 5-semialdehyde + phosphate + NADP(+) = L-glutamyl 5-phosphate + NADPH + H(+). The protein operates within amino-acid biosynthesis; L-proline biosynthesis; L-glutamate 5-semialdehyde from L-glutamate: step 2/2. Catalyzes the NADPH-dependent reduction of L-glutamate 5-phosphate into L-glutamate 5-semialdehyde and phosphate. The product spontaneously undergoes cyclization to form 1-pyrroline-5-carboxylate. The protein is Gamma-glutamyl phosphate reductase of Syntrophomonas wolfei subsp. wolfei (strain DSM 2245B / Goettingen).